The primary structure comprises 256 residues: Pimeloyl-[acyl-carrier protein] methyl ester esterase (256 aa).

In terms of domain architecture, AB hydrolase-1 spans 15-242 (HLVLLHGWGL…AAHAPFISHP (228 aa)). Residues Trp-22, 82–83 (SL), and 143–147 (FLALQ) each bind substrate. The active-site Nucleophile is Ser-82. Catalysis depends on residues Asp-207 and His-235. His-235 lines the substrate pocket.

Belongs to the AB hydrolase superfamily. Carboxylesterase BioH family. In terms of assembly, monomer.

It is found in the cytoplasm. It carries out the reaction 6-carboxyhexanoyl-[ACP] methyl ester + H2O = 6-carboxyhexanoyl-[ACP] + methanol + H(+). It participates in cofactor biosynthesis; biotin biosynthesis. Functionally, the physiological role of BioH is to remove the methyl group introduced by BioC when the pimeloyl moiety is complete. It allows to synthesize pimeloyl-ACP via the fatty acid synthetic pathway through the hydrolysis of the ester bonds of pimeloyl-ACP esters. This Escherichia coli O81 (strain ED1a) protein is Pimeloyl-[acyl-carrier protein] methyl ester esterase.